Reading from the N-terminus, the 274-residue chain is MRDLHAKKQRVPHNRVKKPPKERKPINWGPILKFASRGFGGAALCAGLGFGGWQLYNLVSRTTLLRLEAIEVSPLKRVSREEIITLAGVRPGDSMLKVDLKTVVARLSKNPWLEEVQVRRYFPHTLSITVSERAPQAVANVGCLYYLDDKGVLFKSLVEGDRLDYPLITGFTEEELAQDPKGCQEALKNALALIDTLKNGGVFSLEDISEIHYSKGYGFTLFTMQGGVPVKLGNGGFGEKLTRLAGIYKELQPQMQALDYIDLDYADKIIVKKV.

The segment at 1–24 (MRDLHAKKQRVPHNRVKKPPKERK) is disordered. Residues 1 to 33 (MRDLHAKKQRVPHNRVKKPPKERKPINWGPILK) lie on the Cytoplasmic side of the membrane. Residues 7–21 (KKQRVPHNRVKKPPK) show a composition bias toward basic residues. The chain crosses the membrane as a helical span at residues 34 to 56 (FASRGFGGAALCAGLGFGGWQLY). The Periplasmic segment spans residues 57–274 (NLVSRTTLLR…YADKIIVKKV (218 aa)). The region spanning 65-133 (LRLEAIEVSP…HTLSITVSER (69 aa)) is the POTRA domain.

This sequence belongs to the FtsQ/DivIB family. FtsQ subfamily.

It is found in the cell inner membrane. Essential cell division protein. This Geobacter sp. (strain M21) protein is Cell division protein FtsQ.